A 214-amino-acid chain; its full sequence is Pyridoxine/pyridoxamine 5'-phosphate oxidase (214 aa).

Substrate contacts are provided by residues 9-12 (RKNY) and lysine 67. Residues 62–67 (RMVLLK), 77–78 (YT), lysine 84, and glutamine 106 each bind FMN. Residues tyrosine 124, arginine 128, and serine 132 each coordinate substrate. FMN contacts are provided by residues 141-142 (QS) and tryptophan 186. Substrate is bound at residue 192-194 (RLH). An FMN-binding site is contributed by arginine 196.

The protein belongs to the pyridoxamine 5'-phosphate oxidase family. As to quaternary structure, homodimer. Requires FMN as cofactor.

The enzyme catalyses pyridoxamine 5'-phosphate + O2 + H2O = pyridoxal 5'-phosphate + H2O2 + NH4(+). The catalysed reaction is pyridoxine 5'-phosphate + O2 = pyridoxal 5'-phosphate + H2O2. It functions in the pathway cofactor metabolism; pyridoxal 5'-phosphate salvage; pyridoxal 5'-phosphate from pyridoxamine 5'-phosphate: step 1/1. Its pathway is cofactor metabolism; pyridoxal 5'-phosphate salvage; pyridoxal 5'-phosphate from pyridoxine 5'-phosphate: step 1/1. Functionally, catalyzes the oxidation of either pyridoxine 5'-phosphate (PNP) or pyridoxamine 5'-phosphate (PMP) into pyridoxal 5'-phosphate (PLP). The protein is Pyridoxine/pyridoxamine 5'-phosphate oxidase of Gloeothece citriformis (strain PCC 7424) (Cyanothece sp. (strain PCC 7424)).